The chain runs to 135 residues: Large ribosomal subunit protein uL16c (135 aa).

A compositionally biased stretch (basic residues) spans 1–17; sequence MLSPKRTRFRKQHRGRM. The disordered stretch occupies residues 1–20; that stretch reads MLSPKRTRFRKQHRGRMKGT.

Belongs to the universal ribosomal protein uL16 family. In terms of assembly, part of the 50S ribosomal subunit.

It is found in the plastid. Its subcellular location is the chloroplast. The chain is Large ribosomal subunit protein uL16c from Lemna minor (Common duckweed).